Reading from the N-terminus, the 267-residue chain is L-aspartate dehydrogenase (267 aa).

NAD(+) contacts are provided by alanine 124 and asparagine 190. The active site involves histidine 218.

Belongs to the L-aspartate dehydrogenase family.

The enzyme catalyses L-aspartate + NADP(+) + H2O = oxaloacetate + NH4(+) + NADPH + H(+). It catalyses the reaction L-aspartate + NAD(+) + H2O = oxaloacetate + NH4(+) + NADH + H(+). It participates in cofactor biosynthesis; NAD(+) biosynthesis; iminoaspartate from L-aspartate (dehydrogenase route): step 1/1. Specifically catalyzes the NAD or NADP-dependent dehydrogenation of L-aspartate to iminoaspartate. This is L-aspartate dehydrogenase from Methanococcus maripaludis (strain C6 / ATCC BAA-1332).